The primary structure comprises 366 residues: Tetraacyldisaccharide 4'-kinase (366 aa).

65–72 (TVGGTGKT) contacts ATP. The tract at residues 343-366 (AKSTPASGGATGLNKEHQDGQPAA) is disordered. Basic and acidic residues predominate over residues 356–366 (NKEHQDGQPAA).

The protein belongs to the LpxK family.

It carries out the reaction a lipid A disaccharide + ATP = a lipid IVA + ADP + H(+). It functions in the pathway glycolipid biosynthesis; lipid IV(A) biosynthesis; lipid IV(A) from (3R)-3-hydroxytetradecanoyl-[acyl-carrier-protein] and UDP-N-acetyl-alpha-D-glucosamine: step 6/6. Transfers the gamma-phosphate of ATP to the 4'-position of a tetraacyldisaccharide 1-phosphate intermediate (termed DS-1-P) to form tetraacyldisaccharide 1,4'-bis-phosphate (lipid IVA). The chain is Tetraacyldisaccharide 4'-kinase from Cupriavidus pinatubonensis (strain JMP 134 / LMG 1197) (Cupriavidus necator (strain JMP 134)).